The sequence spans 131 residues: Small ribosomal subunit protein uS8 (131 aa).

Belongs to the universal ribosomal protein uS8 family. Part of the 30S ribosomal subunit. Contacts proteins S5 and S12.

In terms of biological role, one of the primary rRNA binding proteins, it binds directly to 16S rRNA central domain where it helps coordinate assembly of the platform of the 30S subunit. The polypeptide is Small ribosomal subunit protein uS8 (Thiobacillus denitrificans (strain ATCC 25259 / T1)).